The chain runs to 164 residues: I-Kappa-B like protein F1 (164 aa).

ANK repeat units follow at residues 57–89 (HGRQ…NINA), 94–124 (TGNT…DLGA), and 128–157 (QQET…AYNN).

This sequence belongs to the polydnaviridae I-Kappa-B-like protein family.

Functionally, suppresses the host immune response through NF-kappa-B inactivation. Possesses ankyrin repeat domains required for NF-kappa-B binding but lacks the regulatory regions required for dissociation from NF-kappa-B and degradation. Therefore, prevents host NF-kappa-B release and subsequent activation. This Microplitis demolitor bracovirus (isolate Webb) (MdBV) protein is I-Kappa-B like protein F1 (F2).